Reading from the N-terminus, the 130-residue chain is Small ribosomal subunit protein uS9 (130 aa).

This sequence belongs to the universal ribosomal protein uS9 family.

The chain is Small ribosomal subunit protein uS9 from Pseudomonas putida (strain W619).